Consider the following 148-residue polypeptide: D-aminoacyl-tRNA deacylase (148 aa).

A Gly-cisPro motif, important for rejection of L-amino acids motif is present at residues 137 to 138; sequence GP.

The protein belongs to the DTD family. In terms of assembly, homodimer.

It is found in the cytoplasm. It catalyses the reaction glycyl-tRNA(Ala) + H2O = tRNA(Ala) + glycine + H(+). The catalysed reaction is a D-aminoacyl-tRNA + H2O = a tRNA + a D-alpha-amino acid + H(+). In terms of biological role, an aminoacyl-tRNA editing enzyme that deacylates mischarged D-aminoacyl-tRNAs. Also deacylates mischarged glycyl-tRNA(Ala), protecting cells against glycine mischarging by AlaRS. Acts via tRNA-based rather than protein-based catalysis; rejects L-amino acids rather than detecting D-amino acids in the active site. By recycling D-aminoacyl-tRNA to D-amino acids and free tRNA molecules, this enzyme counteracts the toxicity associated with the formation of D-aminoacyl-tRNA entities in vivo and helps enforce protein L-homochirality. This Aquifex aeolicus (strain VF5) protein is D-aminoacyl-tRNA deacylase.